The sequence spans 75 residues: Small integral membrane protein 7 (75 aa).

Residues 1-17 (MIGDILLFGTLLMNAGA) form the signal peptide. Residues 18–53 (VLNFKLKKKDTQGFGEESREPSTGDNIREFLLSLRY) lie on the Extracellular side of the membrane. A helical transmembrane segment spans residues 54–74 (FRIFIALWNIFMMFCMIVLFG). A topological domain (cytoplasmic) is located at residue Ser75.

It belongs to the SMIM7 family.

It is found in the membrane. The chain is Small integral membrane protein 7 (SMIM7) from Homo sapiens (Human).